Consider the following 60-residue polypeptide: Temporin-CG1 (60 aa).

A signal peptide spans 1 to 22 (MFTLKKSLLLLFFLATINLSLC). A propeptide spans 23–43 (EQERNAEEERRDDDERNAEVE) (removed in mature form).

In terms of tissue distribution, expressed by the skin glands.

It is found in the secreted. In terms of biological role, antimicrobial peptide active against a variety of Gram-positive and some Gram-negative bacterial strains. Has antifungal activity against a slime mold isolate. Has weak hemolytic activity against human erythrocytes. This chain is Temporin-CG1, found in Amolops chunganensis (Chungan torrent frog).